We begin with the raw amino-acid sequence, 1328 residues long: Protein turtle homolog B (1328 aa).

A signal peptide spans 1 to 20 (MIWYVATLIASVISTRGLVA). At 21-722 (QVAHGLREEP…DLTDDGLARP (702 aa)) the chain is on the extracellular side. Ig-like domains follow at residues 30–115 (PEFV…ECKV), 139–226 (PTFT…LLVQ), 228–320 (PPFI…AYLT), 324–415 (PARV…ARLV), and 420–504 (PYFT…THLT). Cystine bridges form between C45–C113 and C161–C208. N-linked (GlcNAc...) asparagine glycans are attached at residues N241 and N258. 3 disulfide bridges follow: C250–C303, C346–C397, and C442–C488. Fibronectin type-III domains are found at residues 512 to 604 (APGS…TLAF) and 614 to 708 (LVTP…STDI). N624 carries N-linked (GlcNAc...) asparagine glycosylation. A helical transmembrane segment spans residues 723 to 743 (VLAGIVATICFLAAAILFSTL). At 744–1328 (AACFVNKQRK…EPPTTLPTSG (585 aa)) the chain is on the cytoplasmic side. Disordered regions lie at residues 758–817 (RKKD…EKEL), 914–1040 (PMSS…PEPW), and 1107–1328 (SPGR…PTSG). 3 positions are modified to phosphoserine: S775, S783, and S794. The span at 990–1001 (SPLSSVMSSPPL) shows a compositional bias: low complexity. 3 stretches are compositionally biased toward polar residues: residues 1018-1033 (ENASNSTLPLTQTPTG), 1129-1141 (LVSQGQLRHTSQG), and 1199-1214 (SRLSPLTQSPLSSRTG). An Omega-N-methylarginine modification is found at R1136. Phosphoserine is present on residues S1207 and S1215. Low complexity predominate over residues 1246–1273 (SFSRKSTPSSTGSPSQSSRSGSPSYRPT). Composition is skewed to pro residues over residues 1284–1295 (PSPPPGPAPPAP) and 1318–1328 (PEPPTTLPTSG).

It belongs to the immunoglobulin superfamily. Turtle family. In terms of assembly, found in a complex with MAGI2 and NLGN2, where it interacts with MAGI2 (via PDZ 5 and PDZ 6 domains). In terms of processing, N-glycosylated and sialylated. Not significantly O-glycosylated. In terms of tissue distribution, detected primarily in brain, including cortex, hippocampus, cerebellum and striatum. Largely restricted to inhibitory GABAergic interneurons (at protein level).

Its subcellular location is the postsynaptic cell membrane. The protein localises to the postsynaptic density. Transmembrane protein which is abundantly expressed in interneurons, where it may regulate inhibitory synapse development. May mediate homophilic cell adhesion. This Rattus norvegicus (Rat) protein is Protein turtle homolog B.